An 876-amino-acid polypeptide reads, in one-letter code: Monofunctional isopimaradiene synthase, chloroplastic (876 aa).

A chloroplast-targeting transit peptide spans 1–64 (MAMPSYSSLS…YLRLGSRKII (64 aa)). Mg(2+) is bound by residues D628, D632, N772, T776, and E780. Positions 628 to 632 (DDLYD) match the DDXXD motif motif.

This sequence belongs to the terpene synthase family. Tpsd subfamily. The cofactor is Mg(2+).

The protein resides in the plastid. It is found in the chloroplast. The enzyme catalyses (+)-copalyl diphosphate = isopimara-7,15-diene + diphosphate. Its pathway is terpene metabolism; oleoresin biosynthesis. Functionally, involved in defensive oleoresin formation in conifers in response to insect attack or other injury. Involved in diterpene (C20) olefins biosynthesis. Monofunctional enzyme lacking the DXDD motif in the class II active site relevant for the cyclization of geranylgeranyl diphosphate (GGPP). Requires (+)-copalyl diphosphate ((+)-CPP) as substrate, but no activity with GGPP or ent-CPP. Isopimaradiene is the major products of the enzyme followed by sandaracopimaradiene. The sequence is that of Monofunctional isopimaradiene synthase, chloroplastic from Pinus contorta (Shore pine).